The primary structure comprises 715 residues: Fatty acid oxidation complex subunit alpha (715 aa).

An enoyl-CoA hydratase/isomerase region spans residues M1–A190. D297 is a binding site for substrate. The tract at residues R312 to G715 is 3-hydroxyacyl-CoA dehydrogenase. Residues M325, D344, V401–E403, K408, and S430 contribute to the NAD(+) site. The For 3-hydroxyacyl-CoA dehydrogenase activity role is filled by H451. N454 is an NAD(+) binding site. Substrate contacts are provided by N501 and Y660.

It in the N-terminal section; belongs to the enoyl-CoA hydratase/isomerase family. In the C-terminal section; belongs to the 3-hydroxyacyl-CoA dehydrogenase family. Heterotetramer of two alpha chains (FadB) and two beta chains (FadA).

The catalysed reaction is a (3S)-3-hydroxyacyl-CoA + NAD(+) = a 3-oxoacyl-CoA + NADH + H(+). The enzyme catalyses a (3S)-3-hydroxyacyl-CoA = a (2E)-enoyl-CoA + H2O. It carries out the reaction a 4-saturated-(3S)-3-hydroxyacyl-CoA = a (3E)-enoyl-CoA + H2O. It catalyses the reaction (3S)-3-hydroxybutanoyl-CoA = (3R)-3-hydroxybutanoyl-CoA. The catalysed reaction is a (3Z)-enoyl-CoA = a 4-saturated (2E)-enoyl-CoA. The enzyme catalyses a (3E)-enoyl-CoA = a 4-saturated (2E)-enoyl-CoA. Its pathway is lipid metabolism; fatty acid beta-oxidation. Its function is as follows. Involved in the aerobic and anaerobic degradation of long-chain fatty acids via beta-oxidation cycle. Catalyzes the formation of 3-oxoacyl-CoA from enoyl-CoA via L-3-hydroxyacyl-CoA. It can also use D-3-hydroxyacyl-CoA and cis-3-enoyl-CoA as substrate. In Pseudomonas fluorescens (strain SBW25), this protein is Fatty acid oxidation complex subunit alpha.